The chain runs to 380 residues: Chaperone protein DnaJ (380 aa).

Residues 5-70 form the J domain; the sequence is DYYEVLGVER…SKRAAYDQYG (66 aa). The CR-type zinc-finger motif lies at 139–217; sequence GTTVNIRVPT…CHGEGRVEES (79 aa). Residues cysteine 152, cysteine 155, cysteine 169, cysteine 172, cysteine 191, cysteine 194, cysteine 205, and cysteine 208 each coordinate Zn(2+). 4 CXXCXGXG motif repeats span residues 152–159, 169–176, 191–198, and 205–212; these read CKPCDGSG, CPTCGGIG, CPRCHGHG, and CDSCHGEG.

This sequence belongs to the DnaJ family. In terms of assembly, homodimer. Zn(2+) serves as cofactor.

It localises to the cytoplasm. In terms of biological role, participates actively in the response to hyperosmotic and heat shock by preventing the aggregation of stress-denatured proteins and by disaggregating proteins, also in an autonomous, DnaK-independent fashion. Unfolded proteins bind initially to DnaJ; upon interaction with the DnaJ-bound protein, DnaK hydrolyzes its bound ATP, resulting in the formation of a stable complex. GrpE releases ADP from DnaK; ATP binding to DnaK triggers the release of the substrate protein, thus completing the reaction cycle. Several rounds of ATP-dependent interactions between DnaJ, DnaK and GrpE are required for fully efficient folding. Also involved, together with DnaK and GrpE, in the DNA replication of plasmids through activation of initiation proteins. In Pseudomonas syringae pv. tomato (strain ATCC BAA-871 / DC3000), this protein is Chaperone protein DnaJ.